The following is a 126-amino-acid chain: Fumarate reductase subunit C (126 aa).

3 consecutive transmembrane segments (helical) span residues 30–50 (IFVAWFVLYLMLVLRAVGAGG), 64–84 (VVVVLNVVALSFLLLHAVTWF), and 105–125 (VLAGHYAAWLVVSVIVAWMVL).

The protein belongs to the FrdC family. In terms of assembly, part of an enzyme complex containing four subunits: a flavoprotein (FrdA), an iron-sulfur protein (FrdB), and two hydrophobic anchor proteins (FrdC and FrdD).

The protein localises to the cell membrane. Anchors the catalytic components of the fumarate reductase complex to the cell membrane, binds quinones. This chain is Fumarate reductase subunit C, found in Mycobacterium tuberculosis (strain ATCC 25177 / H37Ra).